The following is a 307-amino-acid chain: MLKSGVMVASLCLFSVPSRAAVPAPGDKFELSGWSLSVPVDSDNDGKADQIKEKTLAAGYRNSDFFTLSDAGGMVFKAPISGAKTSKNTTYTRSELREMLRKGDTSIATQGVSRNNWVLSSAPLSEQKKAGGVDGTLEATLSVDHVTTTGVNWQVGRVIIGQIHANNDEPIRLYYRKLPHHQKGSVYFAHEPRKGFGDEQWYEMIGTLQPSHGNQTAAPTEPEAGIALGETFSYRIDATGNKLTVTLMREGRPDVVKTVDMSKSGYSEAGQYLYFKAGVYNQNKTGKPDDYVQATFYRLKATHGAQR.

An N-terminal signal peptide occupies residues 1–20; sequence MLKSGVMVASLCLFSVPSRA.

This sequence belongs to the polysaccharide lyase 7 family.

Its subcellular location is the secreted. It carries out the reaction Eliminative cleavage of alginate to give oligosaccharides with 4-deoxy-alpha-L-erythro-hex-4-enuronosyl groups at their non-reducing ends and beta-D-mannuronate at their reducing end.. Degrades alginates that contain guluronic acid. The polypeptide is Alginate lyase (alyA) (Klebsiella pneumoniae).